The primary structure comprises 205 residues: Small ribosomal subunit protein uS4 (205 aa).

The segment at M1–K44 is disordered. In terms of domain architecture, S4 RNA-binding spans S94–K173.

This sequence belongs to the universal ribosomal protein uS4 family. In terms of assembly, part of the 30S ribosomal subunit. Contacts protein S5. The interaction surface between S4 and S5 is involved in control of translational fidelity.

In terms of biological role, one of the primary rRNA binding proteins, it binds directly to 16S rRNA where it nucleates assembly of the body of the 30S subunit. Its function is as follows. With S5 and S12 plays an important role in translational accuracy. The polypeptide is Small ribosomal subunit protein uS4 (Maricaulis maris (strain MCS10) (Caulobacter maris)).